The sequence spans 887 residues: Autotaxin (887 aa).

The N-terminal stretch at 1 to 27 (MARQGCLGSFQVISLFTFAISVNICLG) is a signal peptide. The propeptide at 28-35 (FTASRIKR) is removed by furin. Residue Asn53 is glycosylated (N-linked (GlcNAc...) asparagine). SMB domains lie at 54 to 97 (TSGS…LKTA) and 98 to 142 (RGWE…GESH). Cystine bridges form between Cys58–Cys75, Cys62–Cys93, Cys73–Cys86, Cys79–Cys85, Cys102–Cys119, Cys107–Cys137, Cys117–Cys130, Cys123–Cys129, Cys148–Cys194, and Cys156–Cys350. The Cell attachment site signature appears at 126–128 (RGD). The tract at residues 144-501 (VDDDCEEIKV…PTFKYRTKVP (358 aa)) is phosphodiesterase. Zn(2+) is bound by residues Asp171 and Thr209. Catalysis depends on Thr209, which acts as the Nucleophile. Residues Thr209, Asn230, and Asp311 each contribute to the 1-(9Z-octadecenoyl)-sn-glycero-3-phosphate site. 1-hexadecanoyl-sn-glycero-3-phosphate-binding residues include Thr209, Asn230, and Asp311. 1-tetradecanoyl-sn-glycerol 3-phosphate-binding residues include Thr209, Asn230, and Asp311. The Zn(2+) site is built by Asp311, His315, Asp358, and His359. 5 disulfides stabilise this stretch: Cys366–Cys468, Cys413–Cys830, Cys566–Cys691, Cys568–Cys676, and Cys799–Cys809. N-linked (GlcNAc...) asparagine glycans are attached at residues Asn398 and Asn410. Residue His474 participates in Zn(2+) binding. His474 contacts 1-(9Z-octadecenoyl)-sn-glycero-3-phosphate. Residue His474 coordinates 1-hexadecanoyl-sn-glycero-3-phosphate. A 1-tetradecanoyl-sn-glycerol 3-phosphate-binding site is contributed by His474. A glycan (N-linked (GlcNAc...) asparagine) is linked at Asn524. Over residues 586–607 (HTKGSTEAETGKFRGSKHENKK) the composition is skewed to basic and acidic residues. The interval 586-615 (HTKGSTEAETGKFRGSKHENKKNLNGSVEP) is disordered. Asn610 carries N-linked (GlcNAc...) asparagine glycosylation. Residues 622–887 (LYGRPAVLYR…TYLHTYESEI (266 aa)) form a nuclease-like domain region. Residues Asp764, Asn766, Asp768, Leu770, and Asp772 each coordinate Ca(2+). A glycan (N-linked (GlcNAc...) asparagine) is linked at Asn831. Residues 854 to 875 (IEHLTGLDFYRKTSRSYSEILT) are required for secretion.

This sequence belongs to the nucleotide pyrophosphatase/phosphodiesterase family. Zn(2+) is required as a cofactor. Requires Ca(2+) as cofactor. Post-translationally, N-glycosylation, but not furin-cleavage, plays a critical role on secretion and on lysoPLD activity. In terms of processing, the interdomain disulfide bond between Cys-413 and Cys-830 is essential for catalytic activity. As to expression, abundantly expressed in cerebrum and cerebellum. Localized in secretory epithelial cells in the brain and the eye including choroid plexus epithelial cells, ciliary epithelial cells, iris pigment epithelial cells, and retinal pigment cells.

The protein resides in the secreted. It carries out the reaction a 1-O-alkyl-sn-glycero-3-phosphoethanolamine + H2O = a 1-O-alkyl-sn-glycero-3-phosphate + ethanolamine + H(+). The enzyme catalyses a 1-acyl-sn-glycero-3-phosphoethanolamine + H2O = a 1-acyl-sn-glycero-3-phosphate + ethanolamine + H(+). The catalysed reaction is 1-(9Z-octadecenoyl)-sn-glycero-3-phosphoethanolamine + H2O = 1-(9Z-octadecenoyl)-sn-glycero-3-phosphate + ethanolamine + H(+). It catalyses the reaction a 1-O-alkyl-sn-glycero-3-phosphocholine + H2O = a 1-O-alkyl-sn-glycero-3-phosphate + choline + H(+). It carries out the reaction 1-O-(9Z-octadecenyl)-sn-glycero-3-phosphocholine + H2O = 1-O-(9Z-octadecenyl)-sn-glycero-3-phosphate + choline + H(+). The enzyme catalyses 1-O-hexadecyl-sn-glycero-3-phosphocholine + H2O = 1-O-hexadecyl-sn-glycero-3-phosphate + choline + H(+). The catalysed reaction is a 1-O-(1Z-alkenyl)-sn-glycero-3-phosphocholine + H2O = a 1-O-(1Z-alkenyl)-sn-glycero-3-phosphate + choline + H(+). It catalyses the reaction a 1-acyl-sn-glycero-3-phosphocholine + H2O = a 1-acyl-sn-glycero-3-phosphate + choline + H(+). It carries out the reaction 1-dodecanoyl-sn-glycero-3-phosphocholine + H2O = 1-dodecanoyl-sn-glycerol 3-phosphate + choline + H(+). The enzyme catalyses 1-(9Z-octadecenoyl)-sn-glycero-3-phosphocholine + H2O = 1-(9Z-octadecenoyl)-sn-glycero-3-phosphate + choline + H(+). The catalysed reaction is 1-tetradecanoyl-sn-glycero-3-phosphocholine + H2O = 1-tetradecanoyl-sn-glycerol 3-phosphate + choline + H(+). It catalyses the reaction 1-decanoyl-sn-glycero-3-phosphocholine + H2O = 1-decanoyl-sn-glycero-3-phosphate + choline + H(+). It carries out the reaction 1-octadecanoyl-sn-glycero-3-phosphocholine + H2O = 1-octadecanoyl-sn-glycero-3-phosphate + choline + H(+). The enzyme catalyses 1-hexadecanoyl-sn-glycero-3-phosphocholine + H2O = 1-hexadecanoyl-sn-glycero-3-phosphate + choline + H(+). The catalysed reaction is 1-hexanoyl-sn-glycero-3-phosphocholine + H2O = 1-hexanoyl-sn-glycero-3-phosphate + choline + H(+). It catalyses the reaction 1-(9Z,12Z)-octadecadienoyl-sn-glycero-3-phosphocholine + H2O = 1-(9Z,12Z)-octadecadienoyl-sn-glycero-3-phosphate + choline + H(+). It carries out the reaction sphing-4-enine-phosphocholine + H2O = sphing-4-enine 1-phosphate + choline + H(+). The enzyme catalyses 1-(5Z,8Z,11Z,14Z-eicosatetraenoyl)-sn-glycero-3-phosphocholine + H2O = 1-(5Z,8Z,11Z,14Z-eicosatetraenoyl)-sn-glycero-3-phosphate + choline + H(+). The catalysed reaction is a 2-acyl-sn-glycero-3-phosphocholine + H2O = a 2-acyl-sn-glycerol 3-phosphate + choline + H(+). It catalyses the reaction a 1,2-diacyl-sn-glycero-3-phosphocholine + H2O = a 1,2-diacyl-sn-glycero-3-phosphate + choline + H(+). It carries out the reaction 1,2-dioctanoyl-sn-glycero-3-phosphocholine + H2O = 1,2-dioctanoyl-sn-glycero-3-phosphate + choline + H(+). The enzyme catalyses 1,2-didecanoyl-sn-glycero-3-phosphocholine + H2O = 1,2-didecanoyl-sn-glycero-3-phosphate + choline + H(+). The catalysed reaction is a 1-acyl-sn-glycero-3-phospho-L-serine + H2O = a 1-acyl-sn-glycero-3-phosphate + L-serine + H(+). It catalyses the reaction 1-(9Z-octadecenoyl)-sn-glycero-3-phospho-L-serine + H2O = 1-(9Z-octadecenoyl)-sn-glycero-3-phosphate + L-serine + H(+). It carries out the reaction a 2-acyl-sn-glycero-3-phospho-L-serine + H2O = a 2-acyl-sn-glycerol 3-phosphate + L-serine + H(+). With respect to regulation, inhibited by vanadate. Inhibited by micromolar levels of bile salts, such as tauroursodeoxycholate. Not inhibited by taurodeoxycholate. Not inhibited by hydroxysterols, such as 7-hydroxycholesterol, testosterone, dexamethasone and prednisolone. Inhibited by EDTA and EGTA. Secreted lysophospholipase D that hydrolyzes lysophospholipids to produce the signaling molecule lysophosphatidic acid (LPA) in extracellular fluids. Its major substrate is lysophosphatidylcholine. Can also act on sphingosylphosphorylcholine producing sphingosine-1-phosphate, a modulator of cell motility. Can hydrolyze, in vitro, bis-pNPP, to some extent pNP-TMP, and barely ATP. Involved in several motility-related processes such as angiogenesis and neurite outgrowth. Acts as an angiogenic factor by stimulating migration of smooth muscle cells and microtubule formation. Stimulates migration of melanoma cells, probably via a pertussis toxin-sensitive G protein. May have a role in induction of parturition. Possible involvement in cell proliferation and adipose tissue development. Required for LPA production in activated platelets, cleaves the sn-1 lysophospholipids to generate sn-1 lysophosphatidic acids containing predominantly 18:2 and 20:4 fatty acids. Shows a preference for the sn-1 to the sn-2 isomer of 1-O-alkyl-sn-glycero-3-phosphocholine (lyso-PAF). This chain is Autotaxin, found in Rattus norvegicus (Rat).